The following is a 364-amino-acid chain: Mannitol-1-phosphate 5-dehydrogenase (364 aa).

NAD(+) is bound at residue Val6 to Gly17.

It belongs to the mannitol dehydrogenase family.

The enzyme catalyses D-mannitol 1-phosphate + NAD(+) = beta-D-fructose 6-phosphate + NADH + H(+). This Mycoplasma pneumoniae (strain ATCC 29342 / M129 / Subtype 1) (Mycoplasmoides pneumoniae) protein is Mannitol-1-phosphate 5-dehydrogenase (mtlD).